Reading from the N-terminus, the 123-residue chain is NADH-quinone oxidoreductase subunit A (123 aa).

Transmembrane regions (helical) follow at residues 11-31, 68-88, and 93-113; these read YLPI…IMIL, LVAI…PWAI, and IGKM…IGFI.

The protein belongs to the complex I subunit 3 family. NDH-1 is composed of 14 different subunits. Subunits NuoA, H, J, K, L, M, N constitute the membrane sector of the complex.

Its subcellular location is the cell inner membrane. It carries out the reaction a quinone + NADH + 5 H(+)(in) = a quinol + NAD(+) + 4 H(+)(out). NDH-1 shuttles electrons from NADH, via FMN and iron-sulfur (Fe-S) centers, to quinones in the respiratory chain. The immediate electron acceptor for the enzyme in this species is believed to be ubiquinone. Couples the redox reaction to proton translocation (for every two electrons transferred, four hydrogen ions are translocated across the cytoplasmic membrane), and thus conserves the redox energy in a proton gradient. This chain is NADH-quinone oxidoreductase subunit A, found in Rickettsia prowazekii (strain Madrid E).